Consider the following 449-residue polypeptide: Signal recognition particle protein (449 aa).

GTP contacts are provided by residues 109 to 116 (GLQGSGKT), 191 to 195 (DTAGR), and 249 to 252 (SRID).

Belongs to the GTP-binding SRP family. SRP54 subfamily. Part of the signal recognition particle protein translocation system, which is composed of SRP and FtsY. SRP is a ribonucleoprotein composed of Ffh and a 4.5S RNA molecule.

It is found in the cytoplasm. The enzyme catalyses GTP + H2O = GDP + phosphate + H(+). Its function is as follows. Involved in targeting and insertion of nascent membrane proteins into the cytoplasmic membrane. Binds to the hydrophobic signal sequence of the ribosome-nascent chain (RNC) as it emerges from the ribosomes. The SRP-RNC complex is then targeted to the cytoplasmic membrane where it interacts with the SRP receptor FtsY. Interaction with FtsY leads to the transfer of the RNC complex to the Sec translocase for insertion into the membrane, the hydrolysis of GTP by both Ffh and FtsY, and the dissociation of the SRP-FtsY complex into the individual components. The protein is Signal recognition particle protein of Rickettsia felis (strain ATCC VR-1525 / URRWXCal2) (Rickettsia azadi).